A 794-amino-acid polypeptide reads, in one-letter code: Copper amine oxidase-like protein cao2 (794 aa).

Residues 307–318 and 391–396 contribute to the substrate site; these read AYDLGEYGVGYR and AANYEY. Asp309 functions as the Proton acceptor in the catalytic mechanism. Tyr394 (schiff-base intermediate with substrate; via topaquinone) is an active-site residue. A 2',4',5'-topaquinone modification is found at Tyr394. His445 and His447 together coordinate Cu cation. Positions 563-584 are disordered; that stretch reads GDYAPQASDDTPKGLSKWISDD. Mn(2+) contacts are provided by Asp593 and Ile594. A Cu cation-binding site is contributed by His604. The disordered stretch occupies residues 634–748; that stretch reads ALDTSSSVNS…NGGHHHHHHH (115 aa). Over residues 637 to 649 the composition is skewed to low complexity; that stretch reads TSSSVNSTSEATS. Residues 652–714 are compositionally biased toward basic and acidic residues; it reads THHENLRDTS…DAAQKHEGRS (63 aa). Residues 716–727 show a composition bias toward polar residues; that stretch reads TLAQPGQQNANQ.

Belongs to the copper/topaquinone oxidase family. In terms of assembly, homodimer. Requires Cu cation as cofactor. Zn(2+) is required as a cofactor. The cofactor is L-topaquinone. Mn(2+) serves as cofactor. Post-translationally, topaquinone (TPQ) is generated by copper-dependent autoxidation of a specific tyrosyl residue.

The protein resides in the cytoplasm. It carries out the reaction a primary methyl amine + O2 + H2O = an aldehyde + H2O2 + NH4(+). Functionally, copper amine oxidase-like protein that does not show any copper amine oxidase activity. May be the appropriate amine substrate for cao2 has not been identified yet. The sequence is that of Copper amine oxidase-like protein cao2 (cao2) from Schizosaccharomyces pombe (strain 972 / ATCC 24843) (Fission yeast).